A 700-amino-acid chain; its full sequence is DNA ligase 2 (700 aa).

Residues 42 to 46 and 89 to 90 contribute to the NAD(+) site; these read DDAYD and SL. Catalysis depends on K122, which acts as the N6-AMP-lysine intermediate. 4 residues coordinate NAD(+): R143, E177, K303, and K327. 4 residues coordinate Zn(2+): C421, C424, C437, and C443. Residues 590–621 are disordered; that stretch reads MTEPGATPPRPADTDGADGATAEAPGDGGPLA. A BRCT domain is found at 615–700; that stretch reads GDGGPLAGMK…FAVLVAGLLS (86 aa).

It belongs to the NAD-dependent DNA ligase family. LigA subfamily. Mg(2+) serves as cofactor. Requires Mn(2+) as cofactor.

It catalyses the reaction NAD(+) + (deoxyribonucleotide)n-3'-hydroxyl + 5'-phospho-(deoxyribonucleotide)m = (deoxyribonucleotide)n+m + AMP + beta-nicotinamide D-nucleotide.. Its function is as follows. DNA ligase that catalyzes the formation of phosphodiester linkages between 5'-phosphoryl and 3'-hydroxyl groups in double-stranded DNA using NAD as a coenzyme and as the energy source for the reaction. It is essential for DNA replication and repair of damaged DNA. The protein is DNA ligase 2 of Streptomyces coelicolor (strain ATCC BAA-471 / A3(2) / M145).